Reading from the N-terminus, the 406-residue chain is Leu/Ile/Val-binding protein homolog 5 (406 aa).

The N-terminal stretch at M1–A29 is a signal peptide.

Belongs to the leucine-binding protein family.

Functionally, component of an amino-acid transport system. This chain is Leu/Ile/Val-binding protein homolog 5, found in Brucella abortus (strain 2308).